Reading from the N-terminus, the 335-residue chain is tRNA N6-adenosine threonylcarbamoyltransferase (335 aa).

A divalent metal cation is bound by residues histidine 109, histidine 113, and tyrosine 130. Substrate contacts are provided by residues 130-134 (YVSGG), aspartate 162, glycine 177, glutamate 181, and asparagine 266. Aspartate 294 contributes to the a divalent metal cation binding site.

It belongs to the KAE1 / TsaD family. As to quaternary structure, component of the EKC/KEOPS complex composed of at least GON7, TP53RK, TPRKB, OSGEP and LAGE3; the whole complex dimerizes. A divalent metal cation is required as a cofactor.

The protein localises to the cytoplasm. It is found in the nucleus. It catalyses the reaction L-threonylcarbamoyladenylate + adenosine(37) in tRNA = N(6)-L-threonylcarbamoyladenosine(37) in tRNA + AMP + H(+). Functionally, component of the EKC/KEOPS complex that is required for the formation of a threonylcarbamoyl group on adenosine at position 37 (t(6)A37) in tRNAs that read codons beginning with adenine. The complex is probably involved in the transfer of the threonylcarbamoyl moiety of threonylcarbamoyl-AMP (TC-AMP) to the N6 group of A37. OSGEP likely plays a direct catalytic role in this reaction, but requires other protein(s) of the complex to fulfill this activity. This chain is tRNA N6-adenosine threonylcarbamoyltransferase (Osgep), found in Rattus norvegicus (Rat).